The following is a 181-amino-acid chain: MASLTSLIFVSIVTAAHGQTVVSIPLGHNYTLIGPPITSEVIWAKLGSVDYFDIICNKTKPIIVTCNIQNLTLINVSKVYSGYYYGYDRYSSQYRNYLVRVTQLKTTKMPNMAKIRSDDNSLETFTSPTTPDEKNIPDSMIAIVAAVAVVMALIIICMLLYACRYKKFHPKKQDLLLRLNI.

N-linked (GlcNAc...) asparagine; by host glycosylation is found at Asn-29, Asn-57, Asn-70, and Asn-75.

Belongs to the adenoviridae E3_20 family.

Its function is as follows. E3 proteins seem to be dispensable for virus growth in tissue culture cells. They are potentially important for virus growth under special conditions; E3 region may help adenoviruses to evade the immune surveillance of the host. The chain is Early E3 20.3 kDa glycoprotein from Human adenovirus B serotype 11 (strain Slobiski) (HAdV-11).